The chain runs to 486 residues: Probable cytosol aminopeptidase (486 aa).

2 residues coordinate Mn(2+): K256 and D261. Residue K268 is part of the active site. Residues D280, D339, and E341 each contribute to the Mn(2+) site. Residue R343 is part of the active site.

This sequence belongs to the peptidase M17 family. Mn(2+) serves as cofactor.

It is found in the cytoplasm. The enzyme catalyses Release of an N-terminal amino acid, Xaa-|-Yaa-, in which Xaa is preferably Leu, but may be other amino acids including Pro although not Arg or Lys, and Yaa may be Pro. Amino acid amides and methyl esters are also readily hydrolyzed, but rates on arylamides are exceedingly low.. It carries out the reaction Release of an N-terminal amino acid, preferentially leucine, but not glutamic or aspartic acids.. In terms of biological role, presumably involved in the processing and regular turnover of intracellular proteins. Catalyzes the removal of unsubstituted N-terminal amino acids from various peptides. In Synechococcus sp. (strain ATCC 27144 / PCC 6301 / SAUG 1402/1) (Anacystis nidulans), this protein is Probable cytosol aminopeptidase.